The following is a 397-amino-acid chain: Elongation factor Tu (397 aa).

Residues 10–207 form the tr-type G domain; it reads LPHVNVGTIG…TLDSYIPEPV (198 aa). A G1 region spans residues 19-26; sequence GHVDHGKT. Position 19–26 (19–26) interacts with GTP; that stretch reads GHVDHGKT. T26 is a Mg(2+) binding site. Positions 60–64 are G2; that stretch reads GITIN. A G3 region spans residues 81–84; the sequence is DCPG. Residues 81 to 85 and 136 to 139 each bind GTP; these read DCPGH and NKAD. The interval 136–139 is G4; sequence NKAD. The tract at residues 174–176 is G5; sequence SAR.

Belongs to the TRAFAC class translation factor GTPase superfamily. Classic translation factor GTPase family. EF-Tu/EF-1A subfamily. As to quaternary structure, monomer.

Its subcellular location is the cytoplasm. It catalyses the reaction GTP + H2O = GDP + phosphate + H(+). In terms of biological role, GTP hydrolase that promotes the GTP-dependent binding of aminoacyl-tRNA to the A-site of ribosomes during protein biosynthesis. This Pseudomonas syringae pv. syringae (strain B728a) protein is Elongation factor Tu.